A 261-amino-acid chain; its full sequence is Cytochrome c oxidase subunit 3 (261 aa).

Over 1–15 the chain is Mitochondrial matrix; the sequence is MTHQTHAYHMVNPSP. Residues 16 to 34 form a helical membrane-spanning segment; sequence WPLTGALSALLMTSGLIMW. Residues 35–40 lie on the Mitochondrial intermembrane side of the membrane; it reads FHFNSV. The helical transmembrane segment at 41–66 threads the bilayer; sequence ALLMLGLTTNMLTMYQWWRDVIREST. At 67–72 the chain is on the mitochondrial matrix side; it reads FQGHHT. The chain crosses the membrane as a helical span at residues 73–105; the sequence is PNVQKGLRYGMILFIISEVLFFTGFFWAFYHSS. Topologically, residues 106-128 are mitochondrial intermembrane; sequence LAPTPELGGCWPPTGIHPLNPLE. A helical membrane pass occupies residues 129 to 152; the sequence is VPLLNTSVLLASGVSITWAHHSLM. Residues 153–155 are Mitochondrial matrix-facing; it reads EGN. Residues 156 to 183 form a helical membrane-spanning segment; sequence RNHMLQALFITIALGVYFTLLQASEYYE. At 184–190 the chain is on the mitochondrial intermembrane side; sequence APFTISD. The chain crosses the membrane as a helical span at residues 191–223; it reads GVYGSTFFVATGFHGLHVIIGSTFLIVCFFRQL. At 224 to 232 the chain is on the mitochondrial matrix side; sequence KFHFTSSHH. Residues 233-256 traverse the membrane as a helical segment; that stretch reads FGFEAAAWYWHFVDVVWLFLYVSI. Residues 257–261 lie on the Mitochondrial intermembrane side of the membrane; it reads YWWGS.

Belongs to the cytochrome c oxidase subunit 3 family. As to quaternary structure, component of the cytochrome c oxidase (complex IV, CIV), a multisubunit enzyme composed of 14 subunits. The complex is composed of a catalytic core of 3 subunits MT-CO1, MT-CO2 and MT-CO3, encoded in the mitochondrial DNA, and 11 supernumerary subunits COX4I, COX5A, COX5B, COX6A, COX6B, COX6C, COX7A, COX7B, COX7C, COX8 and NDUFA4, which are encoded in the nuclear genome. The complex exists as a monomer or a dimer and forms supercomplexes (SCs) in the inner mitochondrial membrane with NADH-ubiquinone oxidoreductase (complex I, CI) and ubiquinol-cytochrome c oxidoreductase (cytochrome b-c1 complex, complex III, CIII), resulting in different assemblies (supercomplex SCI(1)III(2)IV(1) and megacomplex MCI(2)III(2)IV(2)).

It is found in the mitochondrion inner membrane. The catalysed reaction is 4 Fe(II)-[cytochrome c] + O2 + 8 H(+)(in) = 4 Fe(III)-[cytochrome c] + 2 H2O + 4 H(+)(out). In terms of biological role, component of the cytochrome c oxidase, the last enzyme in the mitochondrial electron transport chain which drives oxidative phosphorylation. The respiratory chain contains 3 multisubunit complexes succinate dehydrogenase (complex II, CII), ubiquinol-cytochrome c oxidoreductase (cytochrome b-c1 complex, complex III, CIII) and cytochrome c oxidase (complex IV, CIV), that cooperate to transfer electrons derived from NADH and succinate to molecular oxygen, creating an electrochemical gradient over the inner membrane that drives transmembrane transport and the ATP synthase. Cytochrome c oxidase is the component of the respiratory chain that catalyzes the reduction of oxygen to water. Electrons originating from reduced cytochrome c in the intermembrane space (IMS) are transferred via the dinuclear copper A center (CU(A)) of subunit 2 and heme A of subunit 1 to the active site in subunit 1, a binuclear center (BNC) formed by heme A3 and copper B (CU(B)). The BNC reduces molecular oxygen to 2 water molecules using 4 electrons from cytochrome c in the IMS and 4 protons from the mitochondrial matrix. The chain is Cytochrome c oxidase subunit 3 (MT-CO3) from Nanger granti (Grant's gazelle).